The following is a 369-amino-acid chain: Aminomethyltransferase (369 aa).

It belongs to the GcvT family. As to quaternary structure, the glycine cleavage system is composed of four proteins: P, T, L and H.

It catalyses the reaction N(6)-[(R)-S(8)-aminomethyldihydrolipoyl]-L-lysyl-[protein] + (6S)-5,6,7,8-tetrahydrofolate = N(6)-[(R)-dihydrolipoyl]-L-lysyl-[protein] + (6R)-5,10-methylene-5,6,7,8-tetrahydrofolate + NH4(+). Its function is as follows. The glycine cleavage system catalyzes the degradation of glycine. This Xanthomonas axonopodis pv. citri (strain 306) protein is Aminomethyltransferase.